The sequence spans 121 residues: MTNYRSGRINEEMKREISNIIRNDMKDPRLSAMVSVTKVDVTKDQKYAKVFVSIYGEDKSKDDTFQVLKSSESFIRREVGHRVKLRNTPEIIIEMDNTIEYGMHINELLHKIKENEKHDNE.

The protein belongs to the RbfA family. Monomer. Binds 30S ribosomal subunits, but not 50S ribosomal subunits or 70S ribosomes.

The protein localises to the cytoplasm. Its function is as follows. One of several proteins that assist in the late maturation steps of the functional core of the 30S ribosomal subunit. Associates with free 30S ribosomal subunits (but not with 30S subunits that are part of 70S ribosomes or polysomes). Required for efficient processing of 16S rRNA. May interact with the 5'-terminal helix region of 16S rRNA. In Clostridium kluyveri (strain NBRC 12016), this protein is Ribosome-binding factor A.